Here is a 680-residue protein sequence, read N- to C-terminus: Chondroitin proteoglycan 4 (680 aa).

An N-terminal signal peptide occupies residues 1–18 (MLRVNLLILLCFVPFSLN). N-linked (GlcNAc...) asparagine glycans are attached at residues N42, N59, N72, N167, N205, N458, N472, N486, N498, N526, N527, N556, and N604. Residues 460 to 680 (TKKAETTKKS…PLTTTLHELY (221 aa)) form a disordered region. Residues 484 to 500 (AANTTAETTKTTSANIT) are compositionally biased toward low complexity. Residues 520 to 530 (SLDTSGNNSTV) show a composition bias toward polar residues. Low complexity-rich tracts occupy residues 633–647 (GEAS…SGEV) and 654–669 (SGYS…SSGE). Residues S640 and S644 are each glycosylated (O-linked (Xyl...) (chondroitin sulfate) serine). An N-linked (GlcNAc...) asparagine glycan is attached at N664.

This Caenorhabditis briggsae protein is Chondroitin proteoglycan 4 (cpg-4).